Here is a 174-residue protein sequence, read N- to C-terminus: NADH-quinone oxidoreductase subunit B 1 (174 aa).

Cys-38, Cys-39, Cys-104, and Cys-133 together coordinate [4Fe-4S] cluster.

Belongs to the complex I 20 kDa subunit family. In terms of assembly, NDH-1 is composed of 14 different subunits. Subunits NuoB, C, D, E, F, and G constitute the peripheral sector of the complex. The cofactor is [4Fe-4S] cluster.

It is found in the cell membrane. The enzyme catalyses a quinone + NADH + 5 H(+)(in) = a quinol + NAD(+) + 4 H(+)(out). Its function is as follows. NDH-1 shuttles electrons from NADH, via FMN and iron-sulfur (Fe-S) centers, to quinones in the respiratory chain. The immediate electron acceptor for the enzyme in this species is believed to be ubiquinone. Couples the redox reaction to proton translocation (for every two electrons transferred, four hydrogen ions are translocated across the cytoplasmic membrane), and thus conserves the redox energy in a proton gradient. The protein is NADH-quinone oxidoreductase subunit B 1 of Chloroflexus aggregans (strain MD-66 / DSM 9485).